We begin with the raw amino-acid sequence, 570 residues long: Spastin (570 aa).

The Cytoplasmic portion of the chain corresponds to 1–35; sequence MNSGHKARLRGGRACGPVSDGSARGNRLLFYTRSL. The segment at residues 36–52 is an intramembrane region (helical); it reads SRVPEWLLRVLLLLLRW. Over 53 to 570 the chain is Cytoplasmic; it reads LFQPIRRAMA…NREYGDTTGV (518 aa). Residues 83–158 form the MIT domain; it reads YHKQAFEFIS…SMAEDRLKLL (76 aa). The tract at residues 186-269 is disordered; that stretch reads APASGAVSKK…SPQRKRDMKN (84 aa). Polar residues-rich tracts occupy residues 199–208, 216–242, and 251–261; these read LTITNQTSLR, TPNA…NQKG, and VKASTTATASP. Residue 335-342 coordinates ATP; the sequence is GPPGNGKT.

It belongs to the AAA ATPase family. Spastin subfamily. As to quaternary structure, homohexamer. The homohexamer is stabilized by ATP-binding. The homohexamer may adopt a ring conformation through which microtubules pass prior to being severed. Interacts with microtubules.

The protein resides in the membrane. Its subcellular location is the cytoplasm. It is found in the cytoskeleton. It localises to the microtubule organizing center. The protein localises to the centrosome. The protein resides in the perinuclear region. Its subcellular location is the nucleus. The catalysed reaction is n ATP + n H2O + a microtubule = n ADP + n phosphate + (n+1) alpha/beta tubulin heterodimers.. ATP-dependent microtubule severing protein that specifically recognizes and cuts microtubules that are polyglutamylated. Preferentially recognizes and acts on microtubules decorated with short polyglutamate tails: severing activity increases as the number of glutamates per tubulin rises from one to eight, but decreases beyond this glutamylation threshold. Microtubule severing promotes reorganization of cellular microtubule arrays and the release of microtubules from the centrosome following nucleation. Required for membrane traffic from the endoplasmic reticulum (ER) to the Golgi and for completion of the abscission stage of cytokinesis. Also plays a role in axon growth and the formation of axonal branches. In Danio rerio (Zebrafish), this protein is Spastin.